Here is a 56-residue protein sequence, read N- to C-terminus: Large ribosomal subunit protein bL32 (56 aa).

Residues 1–26 (MAVQQNKKSRSKRGMRRSHDALSTAQ) are disordered. Residues 7 to 16 (KKSRSKRGMR) show a composition bias toward basic residues.

It belongs to the bacterial ribosomal protein bL32 family.

The sequence is that of Large ribosomal subunit protein bL32 from Shewanella denitrificans (strain OS217 / ATCC BAA-1090 / DSM 15013).